The following is a 428-amino-acid chain: GTPase Obg (428 aa).

The Obg domain maps to 1-158 (MFVDQVQVEV…RFIKLELKVL (158 aa)). Residues 159 to 333 (ADVGLVGFPS…LMHKTAEVLK (175 aa)) enclose the OBG-type G domain. Residues 165 to 172 (GFPSVGKS), 190 to 194 (FTTLV), 212 to 215 (DLPG), 282 to 285 (TKMD), and 314 to 316 (SSL) each bind GTP. Positions 172 and 192 each coordinate Mg(2+). The 79-residue stretch at 350 to 428 (YKYQPEPALK…IDDFTFEFVE (79 aa)) folds into the OCT domain.

It belongs to the TRAFAC class OBG-HflX-like GTPase superfamily. OBG GTPase family. Monomer. The cofactor is Mg(2+).

It localises to the cytoplasm. An essential GTPase which binds GTP, GDP and possibly (p)ppGpp with moderate affinity, with high nucleotide exchange rates and a fairly low GTP hydrolysis rate. Plays a role in control of the cell cycle, stress response, ribosome biogenesis and in those bacteria that undergo differentiation, in morphogenesis control. This Lacticaseibacillus paracasei (strain ATCC 334 / BCRC 17002 / CCUG 31169 / CIP 107868 / KCTC 3260 / NRRL B-441) (Lactobacillus paracasei) protein is GTPase Obg.